Consider the following 557-residue polypeptide: Aspartate--tRNA ligase (557 aa).

Residue Glu-168 coordinates L-aspartate. Residues 192–195 (QIYK) form an aspartate region. Residue Arg-214 participates in L-aspartate binding. Residues 214 to 216 (RDE) and Gln-223 contribute to the ATP site. Residue His-423 participates in L-aspartate binding. ATP is bound at residue Glu-457. Arg-464 provides a ligand contact to L-aspartate. 505–508 (GLDR) contacts ATP.

Belongs to the class-II aminoacyl-tRNA synthetase family. Type 1 subfamily. In terms of assembly, homodimer.

The protein localises to the cytoplasm. It catalyses the reaction tRNA(Asp) + L-aspartate + ATP = L-aspartyl-tRNA(Asp) + AMP + diphosphate. Its function is as follows. Catalyzes the attachment of L-aspartate to tRNA(Asp) in a two-step reaction: L-aspartate is first activated by ATP to form Asp-AMP and then transferred to the acceptor end of tRNA(Asp). The chain is Aspartate--tRNA ligase from Mycoplasma pneumoniae (strain ATCC 29342 / M129 / Subtype 1) (Mycoplasmoides pneumoniae).